The following is a 438-amino-acid chain: EF-hand calcium-binding domain-containing protein 3 (438 aa).

EF-hand domains follow at residues 47-82 (SQMA…LGMN) and 83-118 (LTKH…KNLF). Residues D96, D98, D100, K102, and D107 each contribute to the Ca(2+) site. Y279 is subject to Phosphotyrosine. The span at 405–415 (SSHNSRSSSSS) shows a compositional bias: low complexity. The disordered stretch occupies residues 405–438 (SSHNSRSSSSSDTSECYTDSGRKRKRKGLKGFQQ). The segment covering 426-438 (RKRKRKGLKGFQQ) has biased composition (basic residues).

This Homo sapiens (Human) protein is EF-hand calcium-binding domain-containing protein 3 (EFCAB3).